The primary structure comprises 311 residues: Splicing factor spf30 (311 aa).

A Tudor domain is found at D76–E139. 2 disordered regions span residues R154–S183 and S276–S311. Residues A168–S183 show a composition bias toward polar residues. S173 is modified (phosphoserine). Over residues H301–S311 the composition is skewed to basic and acidic residues.

The protein belongs to the SMN family. In terms of assembly, associates with spliceosomes.

The protein resides in the nucleus. Involved in spliceosome assembly. This is Splicing factor spf30 (spf30) from Schizosaccharomyces pombe (strain 972 / ATCC 24843) (Fission yeast).